Consider the following 354-residue polypeptide: F-box/kelch-repeat protein At1g80440 (354 aa).

The 48-residue stretch at 2–49 (ELIPNLPDDVARECLLRSSYQQFPVIASVCRAWNREVSLSQFLHQRKA) folds into the F-box domain. Kelch repeat units follow at residues 63 to 110 (RVDP…CRLV), 115 to 163 (DLIV…ASDS), 166 to 213 (TVLV…FHAG), and 215 to 263 (FHVI…PPTC).

The polypeptide is F-box/kelch-repeat protein At1g80440 (Arabidopsis thaliana (Mouse-ear cress)).